A 325-amino-acid polypeptide reads, in one-letter code: Adenine deaminase (325 aa).

Zn(2+) is bound by residues histidine 8, histidine 10, and histidine 186. Glutamate 189 functions as the Proton donor in the catalytic mechanism. Aspartate 267 provides a ligand contact to Zn(2+). Aspartate 268 contacts substrate.

The protein belongs to the metallo-dependent hydrolases superfamily. Adenosine and AMP deaminases family. Adenine deaminase type 2 subfamily. Zn(2+) is required as a cofactor.

It carries out the reaction adenine + H2O + H(+) = hypoxanthine + NH4(+). In terms of biological role, catalyzes the hydrolytic deamination of adenine to hypoxanthine. Plays an important role in the purine salvage pathway and in nitrogen catabolism. The chain is Adenine deaminase from Chelativorans sp. (strain BNC1).